The primary structure comprises 363 residues: Phospho-N-acetylmuramoyl-pentapeptide-transferase (363 aa).

11 consecutive transmembrane segments (helical) span residues 27–47 (AGAA…PLIA), 76–96 (TMGG…WADL), 97–117 (TDGY…VGFA), 137–157 (LGCE…LMPA), 171–191 (WLLP…TGFG), 202–222 (GLAI…SYLV), 226–246 (VFAD…CVFC), 248–268 (ALVG…AVFM), 271–291 (TGSL…KHEL), 292–312 (VLCI…IQVF), and 340–360 (KIVI…LATL).

It belongs to the glycosyltransferase 4 family. MraY subfamily. It depends on Mg(2+) as a cofactor.

The protein localises to the cell inner membrane. The catalysed reaction is UDP-N-acetyl-alpha-D-muramoyl-L-alanyl-gamma-D-glutamyl-meso-2,6-diaminopimeloyl-D-alanyl-D-alanine + di-trans,octa-cis-undecaprenyl phosphate = di-trans,octa-cis-undecaprenyl diphospho-N-acetyl-alpha-D-muramoyl-L-alanyl-D-glutamyl-meso-2,6-diaminopimeloyl-D-alanyl-D-alanine + UMP. It functions in the pathway cell wall biogenesis; peptidoglycan biosynthesis. Functionally, catalyzes the initial step of the lipid cycle reactions in the biosynthesis of the cell wall peptidoglycan: transfers peptidoglycan precursor phospho-MurNAc-pentapeptide from UDP-MurNAc-pentapeptide onto the lipid carrier undecaprenyl phosphate, yielding undecaprenyl-pyrophosphoryl-MurNAc-pentapeptide, known as lipid I. This chain is Phospho-N-acetylmuramoyl-pentapeptide-transferase, found in Gluconacetobacter diazotrophicus (strain ATCC 49037 / DSM 5601 / CCUG 37298 / CIP 103539 / LMG 7603 / PAl5).